The chain runs to 163 residues: MANTNLESTNKSTTPSTDMELKKVFDKFDANGDGKISVSELGNVFKSMGTSYTEEELNRVLDEIDIDCDGFINQEEFATICRSSSSAVEIREAFDLYDQNKNGLISSSEIHKVLNRLGMTCSVEDCVRMIGHVDTDGDGNVNFEEFQKMMSSPELVKGTVANS.

A2 bears the N-acetylalanine mark. EF-hand domains lie at 16-51 (STDM…MGTS), 52-82 (YTEE…TICR), 85-120 (SSAV…LGMT), and 121-156 (CSVE…PELV). Ca(2+)-binding residues include D29, N31, D33, K35, E40, D65, D67, D69, E76, D98, N100, N102, E109, D134, D136, D138, N140, and E145.

Potential calcium sensor. The chain is Probable calcium-binding protein CML26 (CML26) from Arabidopsis thaliana (Mouse-ear cress).